We begin with the raw amino-acid sequence, 1359 residues long: Transcriptional regulator ATRX homolog (1359 aa).

The interval 1-402 (MRVGVSESED…RAEKERRKRL (402 aa)) is disordered. A compositionally biased stretch (basic and acidic residues) spans 11–49 (SDGHVIEDEDLEMARQIENERKEKRAQKLKEKREREGKP). Basic residues predominate over residues 50 to 61 (PPKKRPAKKRKA). Residues 64-73 (SEEDDDDEEE) are compositionally biased toward acidic residues. Composition is skewed to basic residues over residues 77–86 (KSSKKSRKRA), 103–123 (KSKS…KKRT), 139–149 (KSKKKSKKTKK), 165–177 (VKKS…KSVK), 194–204 (KKSKKGLKKKA), and 219–229 (KKSKKKSKKVV). Acidic residues predominate over residues 257 to 271 (ESSESEKSDEEEEEK). A compositionally biased stretch (basic and acidic residues) spans 321 to 336 (KDQKSESEASDVEEKV). Over residues 347 to 357 (SESGSDSSEGS) the composition is skewed to low complexity. The span at 362 to 376 (RKSKKKEKPEKKKKG) shows a compositional bias: basic residues. Residues 383–397 (KLQKETIDAERAEKE) show a composition bias toward basic and acidic residues. One can recognise a Helicase ATP-binding domain in the interval 483–685 (DRLDTEGSGG…HCMVNFVKPG (203 aa)). 496-503 (HCMGLGKT) lines the ATP pocket. The DEAH box motif lies at 636–639 (DEAH). The interval 809–891 (RVMREDAEEE…NSDDEDEEDG (83 aa)) is disordered. Positions 814-832 (DAEEEADFIDDGDGSESES) are enriched in acidic residues. Residues 833 to 847 (EGSFKSGSESDSGKS) show a composition bias toward low complexity. Residues 951-1134 (LLVEIIKKCE…EAQIQRHYLG (184 aa)) enclose the Helicase C-terminal domain.

The protein belongs to the SNF2/RAD54 helicase family.

It is found in the nucleus. The catalysed reaction is ATP + H2O = ADP + phosphate + H(+). Its function is as follows. Required for embryonic development and gonadogenesis. Also, functions redundantly with the transcriptional repressor lin-35 to regulate somatic gonad development. The protein is Transcriptional regulator ATRX homolog of Caenorhabditis elegans.